The sequence spans 3707 residues: CUB and sushi domain-containing protein 3 (3707 aa).

A compositionally biased stretch (basic and acidic residues) spans 1–21; the sequence is MKGSRKGESRAKESKPREPGT. Positions 1–22 are disordered; the sequence is MKGSRKGESRAKESKPREPGTR. The Cytoplasmic portion of the chain corresponds to 1 to 42; that stretch reads MKGSRKGESRAKESKPREPGTRRCAKCGRLDFILKKKMGIKS. Residues 43–63 form a helical membrane-spanning segment; that stretch reads GFTFWNLVFLLTLSCVKGFIY. Over 64 to 3630 the chain is Extracellular; the sequence is TCGGTLKGLN…NQPHGTNSSS (3567 aa). Disulfide bonds link Cys-65–Cys-91, Cys-178–Cys-218, Cys-204–Cys-235, and Cys-241–Cys-267. The CUB 1 domain occupies 65-173; it reads CGGTLKGLNG…HGFKVYYEEL (109 aa). N-linked (GlcNAc...) asparagine glycans are attached at residues Asn-73 and Asn-90. In terms of domain architecture, Sushi 1 spans 176–237; that stretch reads SSCGNPGVPP…WDFPVPICRA (62 aa). Residues 241–345 enclose the CUB 2 domain; the sequence is CGGTMRGSSG…RGFSAPYQGS (105 aa). Positions 388-437 are disordered; that stretch reads HRLSEEQRVQVRSLSDSGLDPNTPEDQLSPHQADTQSTSRRPRNAEQIER. Over residues 411–426 the composition is skewed to polar residues; it reads PEDQLSPHQADTQSTS. The region spanning 484 to 545 is the Sushi 2 domain; sequence NLCPDPGEPE…WSDHRPVCKV (62 aa). Cystine bridges form between Cys-486-Cys-526, Cys-512-Cys-543, Cys-548-Cys-574, Cys-664-Cys-704, Cys-690-Cys-717, and Cys-721-Cys-747. The CUB 3 domain occupies 548 to 659; that stretch reads CGSNLQGPSG…VGFKVNYKEI (112 aa). A Sushi 3 domain is found at 662 to 719; that stretch reads ESCGDPGTPLYGIREGDGFSNRDVLRFECQFGFELIGEKSIVCQENNQWSANIPICIF. The 109-residue stretch at 721 to 829 folds into the CUB 4 domain; sequence CLSNFTAPMG…RGFNITYNTF (109 aa). Asn-724 and Asn-823 each carry an N-linked (GlcNAc...) asparagine glycan. A Sushi 4 domain is found at 832 to 893; the sequence is NECPDPGIPI…WSGPIPRCGA (62 aa). 3 cysteine pairs are disulfide-bonded: Cys-834-Cys-875, Cys-860-Cys-891, and Cys-895-Cys-921. The region spanning 895–1003 is the CUB 5 domain; the sequence is CGGHFSAPSG…NGFKIHYESV (109 aa). Asn-966 carries N-linked (GlcNAc...) asparagine glycosylation. One can recognise a Sushi 5 domain in the interval 1008-1065; sequence YSCLDPGIPVHGRRYGHDFSIGSTVSFSCDPGYRLSHEEPLLCEKNHWWSHPLPTCDA. Disulfide bonds link Cys-1010/Cys-1050, Cys-1036/Cys-1063, and Cys-1067/Cys-1093. The CUB 6 domain maps to 1067 to 1177; sequence CGGDVRGPSG…EGFNITFSEY (111 aa). Asn-1092, Asn-1126, and Asn-1171 each carry an N-linked (GlcNAc...) asparagine glycan. One can recognise a Sushi 6 domain in the interval 1180-1239; it reads EPCEDPGIPQYGSRVGFSFGVGDTLTFSCSLGYRLEGSSEIICLGGGRRVWSAPLPRCVA. 3 disulfide bridges follow: Cys-1182–Cys-1222, Cys-1208–Cys-1237, and Cys-1241–Cys-1267. The CUB 7 domain occupies 1241 to 1349; sequence CGASATNNEG…EGFQLVYTSF (109 aa). An N-linked (GlcNAc...) asparagine glycan is attached at Asn-1280. The region spanning 1352–1412 is the Sushi 7 domain; the sequence is SHCEDPGIPQ…WDYPLPSCIA (61 aa). 12 disulfide bridges follow: Cys-1354–Cys-1395, Cys-1381–Cys-1410, Cys-1414–Cys-1441, Cys-1528–Cys-1568, Cys-1554–Cys-1584, Cys-1588–Cys-1614, Cys-1701–Cys-1741, Cys-1727–Cys-1758, Cys-1762–Cys-1788, Cys-1878–Cys-1918, Cys-1904–Cys-1935, and Cys-1939–Cys-1965. Residues 1414-1523 form the CUB 8 domain; that stretch reads CGGRFKGESS…SGFAIQFSSS (110 aa). The Sushi 8 domain maps to 1526-1586; it reads TACRDPGVPM…WQPSPPVCIA (61 aa). A glycan (N-linked (GlcNAc...) asparagine) is linked at Asn-1536. The CUB 9 domain occupies 1588–1696; it reads CGGNLTGSSG…TGFHLEYKAK (109 aa). Residues Asn-1591 and Asn-1709 are each glycosylated (N-linked (GlcNAc...) asparagine). The 62-residue stretch at 1699-1760 folds into the Sushi 9 domain; that stretch reads ESCFDPGNIM…WNRVLPSCHA (62 aa). The region spanning 1762 to 1870 is the CUB 10 domain; the sequence is CGSRSTGSEG…KGFHFVYQAV (109 aa). N-linked (GlcNAc...) asparagine glycosylation is present at Asn-1781. Residues 1876–1937 enclose the Sushi 10 domain; that stretch reads TQCSSVPEPR…WNDSLPTCIV (62 aa). The N-linked (GlcNAc...) asparagine glycan is linked to Asn-1929. One can recognise a CUB 11 domain in the interval 1939–2047; it reads CGGILTKRKG…AGFHLEYTAI (109 aa). N-linked (GlcNAc...) asparagine glycosylation is present at Asn-2019. The 60-residue stretch at 2050 to 2109 folds into the Sushi 11 domain; that stretch reads DSCPEPQTPSSGIKVGDRYMVGDVVSFQCDQGYSLQGHSHITCMPGPVRRWNYPIPICLA. Cystine bridges form between Cys-2052–Cys-2092, Cys-2078–Cys-2107, and Cys-2111–Cys-2137. A CUB 12 domain is found at 2111–2219; it reads CGGAMSDFSG…QGFHIVYQAY (109 aa). An N-linked (GlcNAc...) asparagine glycan is attached at Asn-2155. A Sushi 12 domain is found at 2222–2281; sequence QSCPDPRPFRNGFVIGNDFTVGQTISFECFPGYTLIGNSALTCLHGVSRNWNHPLPRCEA. 36 disulfides stabilise this stretch: Cys-2224/Cys-2264, Cys-2250/Cys-2279, Cys-2283/Cys-2309, Cys-2395/Cys-2437, Cys-2423/Cys-2452, Cys-2456/Cys-2484, Cys-2569/Cys-2610, Cys-2596/Cys-2627, Cys-2632/Cys-2674, Cys-2658/Cys-2689, Cys-2694/Cys-2739, Cys-2725/Cys-2754, Cys-2759/Cys-2799, Cys-2785/Cys-2812, Cys-2817/Cys-2857, Cys-2843/Cys-2870, Cys-2875/Cys-2915, Cys-2901/Cys-2928, Cys-2933/Cys-2977, Cys-2963/Cys-2990, Cys-2995/Cys-3035, Cys-3021/Cys-3048, Cys-3056/Cys-3096, Cys-3082/Cys-3109, Cys-3114/Cys-3155, Cys-3141/Cys-3168, Cys-3173/Cys-3215, Cys-3199/Cys-3228, Cys-3233/Cys-3273, Cys-3259/Cys-3286, Cys-3291/Cys-3331, Cys-3317/Cys-3344, Cys-3352/Cys-3393, Cys-3379/Cys-3406, Cys-3411/Cys-3453, and Cys-3438/Cys-3466. Positions 2283–2394 constitute a CUB 13 domain; it reads CGGNITAMNG…LSYHAYQLRV (112 aa). N-linked (GlcNAc...) asparagine glycosylation is found at Asn-2286 and Asn-2291. Positions 2393 to 2454 constitute a Sushi 13 domain; that stretch reads RVCQPPPPVP…MDGAPPVCQV (62 aa). Residues 2456 to 2567 enclose the CUB 14 domain; the sequence is CPANELRLDS…KGFRIRYIAF (112 aa). Sushi domains are found at residues 2567–2629, 2630–2691, 2692–2756, 2757–2814, 2815–2872, 2873–2930, 2931–2992, 2993–3050, 3054–3111, 3112–3170, 3171–3230, 3231–3288, 3289–3346, 3350–3408, and 3409–3468; these read FYCS…ACQA, ISCG…RCVV, VTCP…YCQI, ISCG…RCLA, GHCG…SCVP, VSCG…VCKV, VNCS…ECIM, IDCG…HCSG, GTCG…ECKA, VQCG…NCTI, ISCG…TCRA, VTCS…QCLP, KFCG…HCIE, TSCE…ECIP, and HSCK…VCEA. Over residues 3052–3065 the composition is skewed to low complexity; the sequence is TTGTCGDPGTPGHG. The disordered stretch occupies residues 3052 to 3071; sequence TTGTCGDPGTPGHGSRQESD. A helical membrane pass occupies residues 3631–3651; the sequence is VAIAILVPFFALIFAGFGFYL. The Cytoplasmic segment spans residues 3652 to 3707; it reads YKQRTAPKTQYTGCSVHENNNGQAAFENPMYDTNAKSVEGKAVRFDPNLNTVCTMV.

Belongs to the CSMD family. As to expression, expressed in the apical dendrites of postnatal hippocampal neurons (at protein level).

Its subcellular location is the cell membrane. In terms of biological role, involved in dendrite development. This Mus musculus (Mouse) protein is CUB and sushi domain-containing protein 3 (Csmd3).